Reading from the N-terminus, the 719-residue chain is Potassium-transporting ATPase ATP-binding subunit (719 aa).

Transmembrane regions (helical) follow at residues 35 to 55, 62 to 82, 228 to 248, and 254 to 274; these read LFVV…PGLF, VYYA…NYAE, ILLS…FFFG, and FVGG…VALM. The active-site 4-aspartylphosphate intermediate is aspartate 318. ATP contacts are provided by aspartate 355 and glutamate 359. The segment at 372–396 is disordered; sequence GKVQTDGGQSASEELDEPGDSVDAP. Residues 373–383 are compositionally biased toward polar residues; the sequence is KVQTDGGQSAS. ATP-binding positions include 416-423 and lysine 435; that span reads FSAETRMS. Mg(2+) is bound by residues aspartate 554 and aspartate 558. The next 3 membrane-spanning stretches (helical) occupy residues 624 to 644, 652 to 672, and 698 to 718; these read FVLL…MDIL, AVTA…PLAL, and LIAP…LGVF.

This sequence belongs to the cation transport ATPase (P-type) (TC 3.A.3) family. Type IA subfamily. The system is composed of three essential subunits: KdpA, KdpB and KdpC. The complex also contains KdpF, a small non-essential subunit.

Its subcellular location is the cell membrane. It catalyses the reaction K(+)(out) + ATP + H2O = K(+)(in) + ADP + phosphate + H(+). Its function is as follows. Part of the high-affinity ATP-driven potassium transport (or Kdp) system, which catalyzes the hydrolysis of ATP coupled with the electrogenic transport of potassium into the cytoplasm. This subunit is responsible for energy coupling to the transport system and for the release of the potassium ions to the cytoplasm. The Kdp system is essential for growth under K(+) limitation, and for survival under desiccation and salt crystal inclusion. The chain is Potassium-transporting ATPase ATP-binding subunit from Halobacterium salinarum (strain ATCC 29341 / DSM 671 / R1).